The chain runs to 81 residues: Conotoxin ViKr92 (81 aa).

A signal peptide spans 1 to 22; sequence MKLTWMMIVAVLFLTAWTFVTA. A propeptide spanning residues 23 to 51 is cleaved from the precursor; the sequence is DDTRYKLENPFLKARNELQKLEASQLNER. Disulfide bonds link Cys-53-Cys-70, Cys-60-Cys-74, and Cys-69-Cys-78.

It belongs to the conotoxin O1 superfamily. Expressed by the venom duct.

It is found in the secreted. The sequence is that of Conotoxin ViKr92 from Conus virgo (Virgin cone).